We begin with the raw amino-acid sequence, 638 residues long: Threonine--tRNA ligase (638 aa).

The region spanning 1-59 (MEKIKVKIKGKEYEVEKGTPLGKIFELAGIKDALGGVINGKIIDLQTPVRESGEIKPVY) is the TGS domain. The interval 243-536 (DHRRLGKELE…LLEHYAGLLP (294 aa)) is catalytic. Residues C336, H387, and H513 each contribute to the Zn(2+) site.

The protein belongs to the class-II aminoacyl-tRNA synthetase family. In terms of assembly, homodimer. It depends on Zn(2+) as a cofactor.

It localises to the cytoplasm. The catalysed reaction is tRNA(Thr) + L-threonine + ATP = L-threonyl-tRNA(Thr) + AMP + diphosphate + H(+). In terms of biological role, catalyzes the attachment of threonine to tRNA(Thr) in a two-step reaction: L-threonine is first activated by ATP to form Thr-AMP and then transferred to the acceptor end of tRNA(Thr). Also edits incorrectly charged L-seryl-tRNA(Thr). This is Threonine--tRNA ligase from Aquifex aeolicus (strain VF5).